Consider the following 858-residue polypeptide: Receptor-like protein kinase ANXUR2 (858 aa).

The first 27 residues, 1 to 27 (MNEKLRILFSFLCFFYVLLVSPSQSNG), serve as a signal peptide directing secretion. Over 28–431 (QDISLSCGAS…VKKDFQGDKR (404 aa)) the chain is Extracellular. Residues asparagine 133, asparagine 293, asparagine 303, and asparagine 331 are each glycosylated (N-linked (GlcNAc...) asparagine). A helical membrane pass occupies residues 432–452 (ITAFVIGSAGGVAAVLFCALC). Residues 453–858 (FTMYQRKRKF…FSQIVNPKGR (406 aa)) lie on the Cytoplasmic side of the membrane. Residues 521-794 (FDESNVIGVG…GDVLWNLEFA (274 aa)) form the Protein kinase domain. ATP contacts are provided by residues 527–535 (IGVGGFGKV) and lysine 549. The active-site Proton acceptor is the aspartate 645. Residues 800-858 (TADGSRHRTPSNGGGSVDLGGGGGGVTVNISAGESDLGDDLSSEENSGIFSQIVNPKGR) are disordered. Positions 811–825 (NGGGSVDLGGGGGGV) are enriched in gly residues. Residues 843 to 858 (EENSGIFSQIVNPKGR) show a composition bias toward polar residues.

The protein belongs to the protein kinase superfamily. Ser/Thr protein kinase family. As to expression, expressed in pollen, but not in pistils or seedlings.

It is found in the cell membrane. The catalysed reaction is L-seryl-[protein] + ATP = O-phospho-L-seryl-[protein] + ADP + H(+). The enzyme catalyses L-threonyl-[protein] + ATP = O-phospho-L-threonyl-[protein] + ADP + H(+). In terms of biological role, receptor-like protein kinase that controls pollen tube behavior by directing rupture at proper timing to release the sperm cell. This chain is Receptor-like protein kinase ANXUR2 (ANX2), found in Arabidopsis thaliana (Mouse-ear cress).